Consider the following 334-residue polypeptide: Glyceraldehyde-3-phosphate dehydrogenase (334 aa).

NAD(+) contacts are provided by residues 10–11 (RI), Asp-33, Lys-77, and Thr-119. D-glyceraldehyde 3-phosphate contacts are provided by residues 149–151 (SCT), Thr-180, 209–210 (TG), and Arg-232. Cys-150 serves as the catalytic Nucleophile. Position 314 (Asn-314) interacts with NAD(+).

It belongs to the glyceraldehyde-3-phosphate dehydrogenase family. As to quaternary structure, homotetramer.

The protein resides in the cytoplasm. The enzyme catalyses D-glyceraldehyde 3-phosphate + phosphate + NAD(+) = (2R)-3-phospho-glyceroyl phosphate + NADH + H(+). It functions in the pathway carbohydrate degradation; glycolysis; pyruvate from D-glyceraldehyde 3-phosphate: step 1/5. In terms of biological role, catalyzes the oxidative phosphorylation of glyceraldehyde 3-phosphate (G3P) to 1,3-bisphosphoglycerate (BPG) using the cofactor NAD. The first reaction step involves the formation of a hemiacetal intermediate between G3P and a cysteine residue, and this hemiacetal intermediate is then oxidized to a thioester, with concomitant reduction of NAD to NADH. The reduced NADH is then exchanged with the second NAD, and the thioester is attacked by a nucleophilic inorganic phosphate to produce BPG. The polypeptide is Glyceraldehyde-3-phosphate dehydrogenase (gap) (Chlamydia trachomatis serovar D (strain ATCC VR-885 / DSM 19411 / UW-3/Cx)).